A 166-amino-acid polypeptide reads, in one-letter code: Small ribosomal subunit protein uS5 (166 aa).

Residues 11-74 form the S5 DRBM domain; it reads LQEKLVQVNR…EAARKNMVDV (64 aa).

This sequence belongs to the universal ribosomal protein uS5 family. As to quaternary structure, part of the 30S ribosomal subunit. Contacts proteins S4 and S8.

In terms of biological role, with S4 and S12 plays an important role in translational accuracy. Its function is as follows. Located at the back of the 30S subunit body where it stabilizes the conformation of the head with respect to the body. This Marinobacter nauticus (strain ATCC 700491 / DSM 11845 / VT8) (Marinobacter aquaeolei) protein is Small ribosomal subunit protein uS5.